We begin with the raw amino-acid sequence, 411 residues long: Alpha-N-acetylgalactosaminidase (411 aa).

A signal peptide spans 1–17; the sequence is MLLKTVLLLGHVAQVLM. 2 disulfides stabilise this stretch: Cys-38–Cys-80 and Cys-42–Cys-49. 78–79 is a binding site for substrate; it reads DD. Asn-124 carries N-linked (GlcNAc...) asparagine glycosylation. A disulfide bridge links Cys-127 with Cys-158. Lys-154 is a substrate binding site. The Nucleophile role is filled by Asp-156. Residue Asn-177 is glycosylated (N-linked (GlcNAc...) asparagine). Cys-187 and Cys-209 form a disulfide bridge. Ser-188 is a binding site for substrate. The N-linked (GlcNAc...) asparagine glycan is linked to Asn-201. Residues Arg-213 and Asp-217 each coordinate substrate. The active-site Proton donor is the Asp-217. A phosphoserine mark is found at Ser-322 and Ser-332. N-linked (GlcNAc...) asparagine glycans are attached at residues Asn-359 and Asn-385.

The protein belongs to the glycosyl hydrolase 27 family. In terms of assembly, homodimer.

It is found in the lysosome. The catalysed reaction is Cleavage of non-reducing alpha-(1-&gt;3)-N-acetylgalactosamine residues from human blood group A and AB mucin glycoproteins, Forssman hapten and blood group A lacto series glycolipids.. It carries out the reaction a neolactoside IV(3)-alpha-GalNAc,IV(2)-alpha-Fuc-nLc4Cer(d18:1(4E)) + H2O = a neolactoside IV(2)-alpha-Fuc-nLc4Cer(d18:1(4E)) + N-acetyl-alpha-D-galactosamine. The enzyme catalyses a neolactoside IV(3)-alpha-GalNAc,IV(2)-alpha-Fuc-nLc4Cer(d18:0) + H2O = a neolactoside IV(2)-alpha-Fuc-nLc4Cer(d18:0) + N-acetyl-alpha-D-galactosamine. It catalyses the reaction a globoside IV3GalNAc-Gb4Cer + H2O = N-acetyl-alpha-D-galactosamine + a globoside Gb4Cer. Its function is as follows. Removes terminal alpha-N-acetylgalactosamine residues from glycolipids and glycopeptides. Required for the breakdown of glycolipids. This is Alpha-N-acetylgalactosaminidase from Homo sapiens (Human).